The sequence spans 419 residues: rRNA methyltransferase 3, mitochondrial (419 aa).

The transit peptide at 1-39 directs the protein to the mitochondrion; sequence MAALCGGMLRGCILKPLGLSGSLQLKRNVRALRRTPVRV. The disordered stretch occupies residues 42–68; the sequence is ADEEGRERKQVEASRQRQPRQNESQAC. A compositionally biased stretch (basic and acidic residues) spans 44-56; sequence EEGRERKQVEASR. S-adenosyl-L-methionine contacts are provided by glycine 357, isoleucine 381, and leucine 390.

It belongs to the class IV-like SAM-binding methyltransferase superfamily. RNA methyltransferase TrmH family.

Its subcellular location is the mitochondrion. The enzyme catalyses a uridine in rRNA + S-adenosyl-L-methionine = a 2'-O-methyluridine in rRNA + S-adenosyl-L-homocysteine + H(+). Its function is as follows. S-adenosyl-L-methionine-dependent 2'-O-ribose methyltransferase that catalyzes the formation of 2'-O-methylguanosine at position 1370 (Gm1370) in the mitochondrial large subunit ribosomal RNA (mtLSU rRNA), a conserved modification in the peptidyl transferase domain of the mtLSU rRNA. Also required for formation of 2'-O-methyluridine at position 1369 (Um1369) mediated by MRM2. The sequence is that of rRNA methyltransferase 3, mitochondrial from Xenopus laevis (African clawed frog).